An 806-amino-acid polypeptide reads, in one-letter code: Transitional endoplasmic reticulum ATPase (806 aa).

Residue serine 3 is modified to Phosphoserine. Residues 247–253, asparagine 348, histidine 384, and 521–526 contribute to the ATP site; these read PGTGKTL and GCGKTL. Disordered stretches follow at residues 708–727 and 768–806; these read RRER…EDDP and FGSF…DLYG. Low complexity predominate over residues 768 to 778; it reads FGSFRFPSSNQ. Positions 779-794 are enriched in gly residues; sequence GGSGPSQGSSGGGGGN.

It belongs to the AAA ATPase family. Homohexamer.

It is found in the cytoplasm. It localises to the cytosol. Its subcellular location is the endoplasmic reticulum. The protein localises to the nucleus. It catalyses the reaction ATP + H2O = ADP + phosphate + H(+). In terms of biological role, necessary for the fragmentation of Golgi stacks during mitosis and for their reassembly after mitosis. Involved in the formation of the nuclear envelope, and of the transitional endoplasmic reticulum (tER). The transfer of membranes from the endoplasmic reticulum to the Golgi apparatus occurs via 50-70 nm transition vesicles which derive from part-rough, part-smooth transitional elements of the endoplasmic reticulum (tER). Vesicle budding from the tER is an ATP-dependent process. Also involved in DNA damage response: recruited to double-strand breaks (DSBs) sites and promotes the recruitment of tp53bp1 at DNA damage sites. Together with sprtn metalloprotease, involved in the repair of covalent DNA-protein cross-links (DPCs) during DNA synthesis. Involved in interstrand cross-link repair in response to replication stress by mediating unloading of the ubiquitinated CMG helicase complex. Enhances cell cycle progression and inhibits apoptosis at low temperatures. Essential for the maturation of ubiquitin-containing autophagosomes and the clearance of ubiquitinated protein by autophagy. Acts as a negative regulator of type I interferon production by promoting ubiquitination of RIGI. May play a role in the ubiquitin-dependent sorting of membrane proteins to lysosomes where they undergo degradation. May more particularly play a role in caveolins sorting in cells. By controlling the steady-state expression of the IGF1R receptor, indirectly regulates the insulin-like growth factor receptor signaling pathway. This Danio rerio (Zebrafish) protein is Transitional endoplasmic reticulum ATPase.